Consider the following 50-residue polypeptide: Large ribosomal subunit protein bL33 (50 aa).

The protein belongs to the bacterial ribosomal protein bL33 family.

In Koribacter versatilis (strain Ellin345), this protein is Large ribosomal subunit protein bL33.